The following is a 268-amino-acid chain: Glucosamine-6-phosphate deaminase (268 aa).

Residue D67 is the Proton acceptor; for enolization step of the active site. The For ring-opening step role is filled by N136. H138 serves as the catalytic Proton acceptor; for ring-opening step. E143 (for ring-opening step) is an active-site residue.

Belongs to the glucosamine/galactosamine-6-phosphate isomerase family. NagB subfamily. As to quaternary structure, homohexamer.

The enzyme catalyses alpha-D-glucosamine 6-phosphate + H2O = beta-D-fructose 6-phosphate + NH4(+). Its pathway is amino-sugar metabolism; N-acetylneuraminate degradation; D-fructose 6-phosphate from N-acetylneuraminate: step 5/5. In terms of biological role, catalyzes the reversible isomerization-deamination of glucosamine 6-phosphate (GlcN6P) to form fructose 6-phosphate (Fru6P) and ammonium ion. The sequence is that of Glucosamine-6-phosphate deaminase from Shewanella loihica (strain ATCC BAA-1088 / PV-4).